A 392-amino-acid chain; its full sequence is Casein kinase II subunit alpha (392 aa).

Residues 39–324 (YQLVRKLGRG…AREAMDHPYF (286 aa)) enclose the Protein kinase domain. ATP-binding positions include 45–53 (LGRGKYSEV) and Lys-68. Asp-156 serves as the catalytic Proton acceptor. The tract at residues 334–355 (MGGSNMPSGSSTPVSSASMMSG) is disordered. Residues 337 to 354 (SNMPSGSSTPVSSASMMS) are compositionally biased toward low complexity.

This sequence belongs to the protein kinase superfamily. Ser/Thr protein kinase family. CK2 subfamily. Tetramer composed of an alpha chain, an alpha' and two beta chains.

It localises to the nucleus. The enzyme catalyses L-seryl-[protein] + ATP = O-phospho-L-seryl-[protein] + ADP + H(+). It carries out the reaction L-threonyl-[protein] + ATP = O-phospho-L-threonyl-[protein] + ADP + H(+). Catalytic subunit of a constitutively active serine/threonine-protein kinase complex that phosphorylates a large number of substrates containing acidic residues C-terminal to the phosphorylated serine or threonine. Regulates numerous cellular processes, such as cell cycle progression, apoptosis and transcription, as well as viral infection. May act as a regulatory node which integrates and coordinates numerous signals leading to an appropriate cellular response. During mitosis, functions as a component of the p53/TP53-dependent spindle assembly checkpoint (SAC) that maintains cyclin-B-CDK1 activity and G2 arrest in response to spindle damage. Can also negatively regulate apoptosis. Phosphorylates the caspases CASP9 and CASP2 and the apoptotic regulator NOL3. Phosphorylation protects CASP9 from cleavage and activation by CASP8, and inhibits the dimerization of CASP2 and activation of CASP8. Plays an important role in the circadian clock function by phosphorylating BMAL1. This is Casein kinase II subunit alpha (csnk2a1) from Xenopus laevis (African clawed frog).